A 635-amino-acid chain; its full sequence is MELKMHNVQETENLKFDAEVGKVLNIVIHSLYTNKDIFLRELISNASDACDKLRYESQLNPNLLDLSDELKITISSNKDKNELYITDNGIGMNRQDLIDNLGTIASSGTQKFLDAIKNSKDSSQTVELIGKFGVGFYSSFMVASEVIVESRKAGEEESWIWQSKGDGEYSISKSDNQVPRGTKITLIMHPEENEFLDKFRVENIVTTYSDHINFPVEFIDEEGKSEKLNSKAAIWTKPKNDVTQEEHNDFFRSVAHVGGEPWMILHNKNEGAIEYTNLLYVPSIKPFDLFHPDRRCSVKLYVNKVFITEDNVQIIPQYLRFLKGIVDSPDLPLNISRETLQNNRVVEQIRKSLTKRAISELGKKAKENLEEYTKFWTNFGAVLKEGLCEAMPTDEREALLSICRFHSTGDEKLVSIDDYISRMKPEQEHIYYLTGNSLDSVKNSPQLEGFVSKGLEVLLFVDPVDDFWTSVIHEYKDQKIKSVTRADVDLEKFSSEEDKTDEENKSNEEKTEETILQYFTTVLGDSVKSVKISKKLTDSPVCLAVDEGAMDLRMERFLREQKQLNYRTPKVLEINTKHPLIKSIMKSYAESGENPTLEDMIHLLFYQACIVEGEEMDDVSLFAKRLNNLLGKISV.

Residues 1-337 are a; substrate-binding; it reads MELKMHNVQE…SPDLPLNISR (337 aa). The b stretch occupies residues 338-556; that stretch reads ETLQNNRVVE…EGAMDLRMER (219 aa). The tract at residues 557–635 is c; that stretch reads FLREQKQLNY…LNNLLGKISV (79 aa).

It belongs to the heat shock protein 90 family. In terms of assembly, homodimer.

It localises to the cytoplasm. Molecular chaperone. Has ATPase activity. The sequence is that of Chaperone protein HtpG from Wolbachia pipientis wMel.